Reading from the N-terminus, the 398-residue chain is Cap-specific mRNA (nucleoside-2'-O-)-methyltransferase 1 (398 aa).

In terms of domain architecture, RrmJ-type SAM-dependent 2'-O-MTase spans 85–298 (QFSNRAGHKL…ERYLVCVDFL (214 aa)). S-adenosyl-L-methionine-binding residues include glycine 132 and aspartate 211. The active-site Proton acceptor is the lysine 252. Residues 371-398 (LKAKETTTRTSAESDDSPLSSRESCKDG) are disordered.

It carries out the reaction a 5'-end (N(7)-methyl 5'-triphosphoguanosine)-ribonucleoside in mRNA + S-adenosyl-L-methionine = a 5'-end (N(7)-methyl 5'-triphosphoguanosine)-(2'-O-methyl-ribonucleoside) in mRNA + S-adenosyl-L-homocysteine + H(+). Functionally, S-adenosyl-L-methionine-dependent methyltransferase that mediates RNA cap1 2'-O-ribose methylation to the 5'-cap structure of RNAs. Methylates the ribose of the first nucleotide of a m(7)GpppG-capped mRNA to produce m(7)GpppNmp (cap1). This chain is Cap-specific mRNA (nucleoside-2'-O-)-methyltransferase 1, found in Leishmania braziliensis.